Consider the following 86-residue polypeptide: Small ribosomal subunit protein bS16 (86 aa).

The protein belongs to the bacterial ribosomal protein bS16 family.

This is Small ribosomal subunit protein bS16 from Thermoanaerobacter sp. (strain X514).